The sequence spans 405 residues: Octaketide synthase 3 (405 aa).

Residues 1–10 are compositionally biased toward polar residues; sequence MGSIAESSPL. The disordered stretch occupies residues 1–22; the sequence is MGSIAESSPLMSRENVEGIRKA. Residue Cys176 is part of the active site. CoA is bound by residues Ser283 and 320–323; that span reads GGRA.

Belongs to the thiolase-like superfamily. Chalcone/stilbene synthases family. In terms of assembly, homodimer.

It functions in the pathway secondary metabolite biosynthesis; flavonoid biosynthesis. Functionally, catalyzes the iterative condensations of 8 molecules of malonyl-CoA to produce aromatic octaketides, SEK4 and SEK4b, the products of the minimal polyketide synthase for the benzoisochromanequinone actinorhodin. May be involved in the biosynthesis of the octaketide barbaloin. This chain is Octaketide synthase 3 (PKS5), found in Aloe arborescens (Kidachi aloe).